A 211-amino-acid chain; its full sequence is Endonuclease V (211 aa).

Residues Asp-37 and Asp-102 each contribute to the Mg(2+) site.

It belongs to the endonuclease V family. Mg(2+) serves as cofactor.

It is found in the cytoplasm. It carries out the reaction Endonucleolytic cleavage at apurinic or apyrimidinic sites to products with a 5'-phosphate.. Its function is as follows. DNA repair enzyme involved in the repair of deaminated bases. Selectively cleaves double-stranded DNA at the second phosphodiester bond 3' to a deoxyinosine leaving behind the intact lesion on the nicked DNA. The sequence is that of Endonuclease V from Ignicoccus hospitalis (strain KIN4/I / DSM 18386 / JCM 14125).